Reading from the N-terminus, the 570-residue chain is Sulfite reductase [NADPH] hemoprotein beta-component (570 aa).

Residues Cys-434, Cys-440, Cys-479, and Cys-483 each coordinate [4Fe-4S] cluster. Cys-483 is a binding site for siroheme.

The protein belongs to the nitrite and sulfite reductase 4Fe-4S domain family. Alpha(8)-beta(8). The alpha component is a flavoprotein, the beta component is a hemoprotein. Siroheme is required as a cofactor. It depends on [4Fe-4S] cluster as a cofactor.

The enzyme catalyses hydrogen sulfide + 3 NADP(+) + 3 H2O = sulfite + 3 NADPH + 4 H(+). The protein operates within sulfur metabolism; hydrogen sulfide biosynthesis; hydrogen sulfide from sulfite (NADPH route): step 1/1. In terms of biological role, component of the sulfite reductase complex that catalyzes the 6-electron reduction of sulfite to sulfide. This is one of several activities required for the biosynthesis of L-cysteine from sulfate. In Escherichia coli O127:H6 (strain E2348/69 / EPEC), this protein is Sulfite reductase [NADPH] hemoprotein beta-component.